The following is a 475-amino-acid chain: Ribulose bisphosphate carboxylase large chain (475 aa).

Residues 1–2 (MS) constitute a propeptide that is removed on maturation. P3 bears the N-acetylproline mark. At K14 the chain carries N6,N6,N6-trimethyllysine. Substrate-binding residues include N123 and T173. K175 (proton acceptor) is an active-site residue. Substrate is bound at residue K177. Positions 201, 203, and 204 each coordinate Mg(2+). Residue K201 is modified to N6-carboxylysine. H294 acts as the Proton acceptor in catalysis. Positions 295, 327, and 379 each coordinate substrate.

This sequence belongs to the RuBisCO large chain family. Type I subfamily. In terms of assembly, heterohexadecamer of 8 large chains and 8 small chains. Mg(2+) serves as cofactor.

Its subcellular location is the plastid. The protein localises to the chloroplast. It catalyses the reaction 2 (2R)-3-phosphoglycerate + 2 H(+) = D-ribulose 1,5-bisphosphate + CO2 + H2O. The catalysed reaction is D-ribulose 1,5-bisphosphate + O2 = 2-phosphoglycolate + (2R)-3-phosphoglycerate + 2 H(+). RuBisCO catalyzes two reactions: the carboxylation of D-ribulose 1,5-bisphosphate, the primary event in carbon dioxide fixation, as well as the oxidative fragmentation of the pentose substrate in the photorespiration process. Both reactions occur simultaneously and in competition at the same active site. The chain is Ribulose bisphosphate carboxylase large chain from Coleochaete orbicularis (Charophycean green alga).